A 239-amino-acid chain; its full sequence is Ribosome assembly factor mrt4 (239 aa).

It belongs to the universal ribosomal protein uL10 family. In terms of assembly, associates with the pre-60S ribosomal particle.

The protein resides in the nucleus. It is found in the nucleolus. Its subcellular location is the cytoplasm. Its function is as follows. Component of the ribosome assembly machinery. Nuclear paralog of the ribosomal protein P0, it binds pre-60S subunits at an early stage of assembly in the nucleolus, and is replaced by P0 in cytoplasmic pre-60S subunits and mature 80S ribosomes. The sequence is that of Ribosome assembly factor mrt4 from Candida glabrata (strain ATCC 2001 / BCRC 20586 / JCM 3761 / NBRC 0622 / NRRL Y-65 / CBS 138) (Yeast).